The sequence spans 402 residues: Beta-ketoacyl-[acyl-carrier-protein] synthase III B, chloroplastic (402 aa).

Residues C178, H328, and N358 contribute to the active site.

Belongs to the thiolase-like superfamily. FabH family.

It localises to the plastid. Its subcellular location is the chloroplast. The enzyme catalyses malonyl-[ACP] + acetyl-CoA + H(+) = 3-oxobutanoyl-[ACP] + CO2 + CoA. The protein operates within lipid metabolism; fatty acid biosynthesis. Catalyzes the condensation reaction of fatty acid synthesis by the addition to an acyl acceptor of two carbons from malonyl-ACP. KAS III catalyzes the first condensation reaction which initiates fatty acid synthesis and may therefore play a role in governing the total rate of fatty acid production. Possesses both acetoacetyl-ACP synthase and acetyl transacylase activities. This is Beta-ketoacyl-[acyl-carrier-protein] synthase III B, chloroplastic (KAS3B) from Cuphea wrightii (Wright's waxweed).